A 539-amino-acid chain; its full sequence is Chaperonin GroEL (539 aa).

ATP contacts are provided by residues 30 to 33, Lys51, 87 to 91, Gly415, and Asp495; these read TLGP and DGTTT.

It belongs to the chaperonin (HSP60) family. As to quaternary structure, forms a cylinder of 14 subunits composed of two heptameric rings stacked back-to-back. Interacts with the co-chaperonin GroES.

It is found in the cytoplasm. It catalyses the reaction ATP + H2O + a folded polypeptide = ADP + phosphate + an unfolded polypeptide.. In terms of biological role, together with its co-chaperonin GroES, plays an essential role in assisting protein folding. The GroEL-GroES system forms a nano-cage that allows encapsulation of the non-native substrate proteins and provides a physical environment optimized to promote and accelerate protein folding. The chain is Chaperonin GroEL from Serratia rubidaea (Serratia marinorubra).